A 334-amino-acid chain; its full sequence is Fructose-1,6-bisphosphatase class 1 (334 aa).

Mg(2+)-binding residues include Glu89, Asp112, Leu114, and Asp115. Residues Asp115–Ser118, Asn208, Tyr241, and Lys271 each bind substrate. A Mg(2+)-binding site is contributed by Glu277.

Belongs to the FBPase class 1 family. As to quaternary structure, homotetramer. Mg(2+) is required as a cofactor.

It localises to the cytoplasm. The catalysed reaction is beta-D-fructose 1,6-bisphosphate + H2O = beta-D-fructose 6-phosphate + phosphate. It participates in carbohydrate biosynthesis; gluconeogenesis. In Serratia proteamaculans (strain 568), this protein is Fructose-1,6-bisphosphatase class 1.